A 223-amino-acid chain; its full sequence is AMSH-like ubiquitin thioesterase 2 (223 aa).

One can recognise an MPN domain in the interval 49-177; that stretch reads VHISERLLED…YGIFKLTDPG (129 aa). Zn(2+) contacts are provided by H127, H129, D140, H142, C185, H191, and H193. The short motif at 127 to 140 is the JAMM motif element; the sequence is HTHPSQGCFMSSVD.

This sequence belongs to the peptidase M67C family. Zn(2+) serves as cofactor.

Zinc metalloprotease that cleaves 'Lys-48'- and 'Lys-63'-linked polyubiquitin chains. The chain is AMSH-like ubiquitin thioesterase 2 (AMSH2) from Arabidopsis thaliana (Mouse-ear cress).